The primary structure comprises 120 residues: UPF0344 protein BCAH187_A1308 (120 aa).

The next 4 membrane-spanning stretches (helical) occupy residues I6 to G26, V32 to L52, W64 to V84, and A91 to L111.

It belongs to the UPF0344 family.

It is found in the cell membrane. This chain is UPF0344 protein BCAH187_A1308, found in Bacillus cereus (strain AH187).